We begin with the raw amino-acid sequence, 113 residues long: Small ribosomal subunit protein bS6 (113 aa).

The protein belongs to the bacterial ribosomal protein bS6 family.

Its function is as follows. Binds together with bS18 to 16S ribosomal RNA. This chain is Small ribosomal subunit protein bS6, found in Wigglesworthia glossinidia brevipalpis.